The chain runs to 249 residues: MDELSTSPYQFRRTQSCRVTNKGPNGLARRGTQRGCSRSKSTRRGNLGTIASLTFSQKQALNLSWRLLKPQASACFRKIFLELEIASPKVKQIFYKAALVDAFNKDDDNSATMEVHIKLTTKFFDELLVSLDDETEFVNKIRGIGSAHAILAKGSNFSSDIWERLGEIAMERVCSHEVVTKTREASRAWRTLIAILIDELRGGFEGELRQHRKSSSTDQIEMGKMEDEEELHAKLQQLRMDYNQTLPYT.

The segment at T20 to R43 is disordered. The Globin domain maps to S52–E205. The heme site is built by H116 and H148.

It belongs to the globin family.

The sequence is that of Globin-like protein 9 (glb-9) from Caenorhabditis elegans.